We begin with the raw amino-acid sequence, 765 residues long: MTTYLEFIQQNEERDGVRFSWNVWPSSRLEATRMVVPVAALFTPLKERPDSPPIQYEPVLCSRTTCRAVLNPLCQVDYRAKLWACNFCYQRNQFPPSYAGISELNQPAELLPQFSSIEYVVLRGPQMPLIFLYVVDTCMEDEDLQALKESMQMSLSLLPPTALVGLITFGRMVQVHELGCEGISKSYVFRGTKDLSAKQLQEMLGLSKVPVTQATRGPQVQQPPPSNRFLQPVQKIDMNLTDLLGELQRDPWPVPQGKRPLRSSGVALSIAVGLLECTFPNTGARIMMFIGGPATQGPGMVVGDELKTPIRSWHDIDKDNAKYVKKGTKHFEALANRAATTGHVIDIYACALDQTGLLEMKCCPNLTGGYMVMGDSFNTSLFKQTFQRVFTKDMHGQFKMGFGGTLEIKTSREIKISGAIGPCVSLNSKGPCVSENEIGTGGTCQWKICGLSPTTTLAIYFEVVNQHNAPIPQGGRGAIQFVTQYQHSSGQRRIRVTTIARNWADAQTQIQNIAASFDQEAAAILMARLAIYRAETEEGPDVLRWLDRQLIRLCQKFGEYHKDDPSSFRFSETFSLYPQFMFHLRRSSFLQVFNNSPDESSYYRHHFMRQDLTQSLIMIQPILYAYSFSGPPEPVLLDSSSILADRILLMDTFFQILIYHGETIAQWRKSGYQDMPEYENFRHLLQAPVDDAQEILHSRFPMPRYIDTEHGGSQARFLLSKVNPSQTHNNMYAWGQESGAPILTDDVSLQVFMDHLKKLAVSSAA.

Thr2 is modified (N-acetylthreonine). Residues Cys61, Cys66, Cys85, and Cys88 each contribute to the Zn(2+) site. Thr308 carries the post-translational modification Phosphothreonine. Residues 632–718 (PEPVLLDSSS…EHGGSQARFL (87 aa)) form a Gelsolin-like repeat.

It belongs to the SEC23/SEC24 family. SEC23 subfamily. COPII is composed of at least five proteins: the Sec23/24 complex, the Sec13/31 complex and Sar1. Interacts with SEC23IP. Interacts with HTR4. Interacts with SEC16A. Interacts with SLC6A4. Interacts (as part of the Sec23/24 complex) with SEC22B; recruits SEC22B into COPII-coated vesicles and allows the transport of this cargo from the endoplasmic reticulum to the Golgi. Interacts (via Gelsolin-like repeat) with MIA2 and MIA3; specifically involved in the transport of large cargos like the collagen COL7A1. Interacts with DDHD1. Interacts with TMEM39A. Interacts with SACM1L; this interaction is reduced in the absence of TMEM39A. Interacts with kinase FAM20C; transport of FAM20C from the endoplasmic reticulum to the Golgi is likely to be mediated by COPII vesicles.

It localises to the cytoplasmic vesicle. The protein resides in the COPII-coated vesicle membrane. It is found in the endoplasmic reticulum membrane. Its subcellular location is the cytoplasm. The protein localises to the cytosol. Its function is as follows. Component of the coat protein complex II (COPII) which promotes the formation of transport vesicles from the endoplasmic reticulum (ER). The coat has two main functions, the physical deformation of the endoplasmic reticulum membrane into vesicles and the selection of cargo molecules for their transport to the Golgi complex. Required for the translocation of insulin-induced glucose transporter SLC2A4/GLUT4 to the cell membrane. The sequence is that of Protein transport protein Sec23A from Pongo abelii (Sumatran orangutan).